Reading from the N-terminus, the 189-residue chain is Elongation factor P (189 aa).

Belongs to the elongation factor P family.

Its subcellular location is the cytoplasm. It participates in protein biosynthesis; polypeptide chain elongation. Its function is as follows. Involved in peptide bond synthesis. Stimulates efficient translation and peptide-bond synthesis on native or reconstituted 70S ribosomes in vitro. Probably functions indirectly by altering the affinity of the ribosome for aminoacyl-tRNA, thus increasing their reactivity as acceptors for peptidyl transferase. The sequence is that of Elongation factor P from Orientia tsutsugamushi (strain Boryong) (Rickettsia tsutsugamushi).